A 639-amino-acid chain; its full sequence is Kininogen-1 (639 aa).

The first 18 residues, M1–A18, serve as a signal peptide directing secretion. A Cystatin kininogen-type 1 domain is found at C28–K132. Cystine bridges form between C28/C609, C83/C94, C107/C126, C142/C145, C206/C218, C229/C248, C264/C267, C328/C340, and C351/C370. A glycan (N-linked (GlcNAc...) asparagine) is linked at N82. In terms of domain architecture, Cystatin kininogen-type 2 spans V151–D254. N169 and N205 each carry an N-linked (GlcNAc...) asparagine glycan. Residues V273–T376 form the Cystatin kininogen-type 3 domain. A glycan (N-linked (GlcNAc...) asparagine) is linked at N294. S332 is modified (phosphoserine). 2 disordered regions span residues N438–H462 and G476–P547. Residues P482 to D502 show a composition bias toward basic residues. The span at K503–R519 shows a compositional bias: basic and acidic residues. The span at L522–G537 shows a compositional bias: polar residues. N-linked (GlcNAc...) asparagine glycosylation occurs at N529.

In terms of processing, bradykinin is released from kininogen by plasma kallikrein. Phosphorylated by FAM20C in the extracellular medium. Post-translationally, bradykinin is inactivated by ACE, which removes the dipeptide Arg-Phe from its C-terminus. As to expression, plasma.

It is found in the secreted. The protein localises to the extracellular space. In terms of biological role, kininogens are inhibitors of thiol proteases. HMW-kininogen plays an important role in blood coagulation by helping to position optimally prekallikrein and factor XI next to factor XII; HMW-kininogen inhibits the thrombin- and plasmin-induced aggregation of thrombocytes. LMW-kininogen inhibits the aggregation of thrombocytes. LMW-kininogen is in contrast to HMW-kininogen not involved in blood clotting. Its function is as follows. The active peptide bradykinin is a potent vasodilatator that is released from HMW-kininogen shows a variety of physiological effects: (A) influence in smooth muscle contraction, (B) induction of hypotension, (C) natriuresis and diuresis, (D) decrease in blood glucose level, (E) it is a mediator of inflammation and causes (E1) increase in vascular permeability, (E2) stimulation of nociceptors (4E3) release of other mediators of inflammation (e.g. prostaglandins), (F) it has a cardioprotective effect (directly via bradykinin action, indirectly via endothelium-derived relaxing factor action). The chain is Kininogen-1 (Kng1) from Rattus norvegicus (Rat).